A 156-amino-acid chain; its full sequence is Small ribosomal subunit protein uS7cz/uS7cy (156 aa).

Belongs to the universal ribosomal protein uS7 family. As to quaternary structure, part of the 30S ribosomal subunit.

Its subcellular location is the plastid. The protein resides in the chloroplast. In terms of biological role, one of the primary rRNA binding proteins, it binds directly to 16S rRNA where it nucleates assembly of the head domain of the 30S subunit. This Saccharum hybrid (Sugarcane) protein is Small ribosomal subunit protein uS7cz/uS7cy (rps7-A).